Reading from the N-terminus, the 861-residue chain is Isoleucine--tRNA ligase (861 aa).

Residues 57–67 (PYANGNIHVGH) carry the 'HIGH' region motif. E549 lines the L-isoleucyl-5'-AMP pocket. Positions 590–594 (KMSKS) match the 'KMSKS' region motif. K593 serves as a coordination point for ATP.

Belongs to the class-I aminoacyl-tRNA synthetase family. IleS type 1 subfamily. Monomer.

The protein resides in the cytoplasm. The enzyme catalyses tRNA(Ile) + L-isoleucine + ATP = L-isoleucyl-tRNA(Ile) + AMP + diphosphate. Functionally, catalyzes the attachment of isoleucine to tRNA(Ile). As IleRS can inadvertently accommodate and process structurally similar amino acids such as valine, to avoid such errors it has two additional distinct tRNA(Ile)-dependent editing activities. One activity is designated as 'pretransfer' editing and involves the hydrolysis of activated Val-AMP. The other activity is designated 'posttransfer' editing and involves deacylation of mischarged Val-tRNA(Ile). The polypeptide is Isoleucine--tRNA ligase (Mycoplasma pneumoniae (strain ATCC 29342 / M129 / Subtype 1) (Mycoplasmoides pneumoniae)).